The sequence spans 78 residues: HssA/B-like protein 29 (78 aa).

The disordered stretch occupies residues 1-31; sequence MTLFSSITSISKTNTSSKSSLNSFSGSSLSM.

The protein belongs to the hssA/B family.

This Dictyostelium discoideum (Social amoeba) protein is HssA/B-like protein 29 (hssl29).